The primary structure comprises 758 residues: MRSVRSSSRTPKPVKRFVFDEDEDLEEIDLDEVDNADFEREDDEEEVLSEPSESPYTSTPKSSKRVNKTRGTKDFFKKDESLQLFRFVLNECRSQKPGRVGRVAKKRVGVNSMKYWERYKREIQGYRLPKQYRYHYSFYSKCFYKVLGLTPEEKVDLYYACEMPVVTDAEKQWLVEQFHVEFDEFGVIIGSDVCTHWDEEHSDSEDDSGKKEEKAREVSRYTEYHDDMMWKFIVDKISEGAQPIIDKHPIWDEFVKLNEENDVISKKSGRNHYDRFRRILVPNLHFMPYDDFTKAVLYERLEYPIPEEYRKILFTTTGADINESGFIEYLPPSTIHQISPIVPIPCHKSNPKFSQLKEPKDLILWSERKKFTPREDSQIWEFVRRKCVDSAGIFVKNDVLRGRGTLFFKDFRNTERKYESITQRFVVLRKLIMDTDYSLKQKLEIYYAISQPVDEDALDAFKSIACLVLNPDGTIRFAISKSFLIGRISDEPAKLEAENYSYVYDLFIFNETFGTAENPEPLCSVSQNRAEKFMLVSQLVFRFISRFEALEDRRIAWITPNAQVAPKEPVPAPSKKKSAFEAYQSSPQTFDTIQRFSTKRPFFCGDNFQIPPKKPFLAEEDVKLEPMEYENSEQIVENAEIKLEPAEELLDAETVTVEEFLMNSYSTAAPSTSTAPAPPKAPVTAPPAPQKSAQLLGKIDFAIGKMRENFDRFLQFAQQNSADLTVVQRYRYDAQMQQMTEKFTKDVSKVLSGDSIKR.

The segment covering 30–48 has biased composition (acidic residues); the sequence is LDEVDNADFEREDDEEEVL. Positions 30-70 are disordered; that stretch reads LDEVDNADFEREDDEEEVLSEPSESPYTSTPKSSKRVNKTR. The span at 49–61 shows a compositional bias: low complexity; the sequence is SEPSESPYTSTPK. The GBA signature appears at 653-666; sequence ETVTVEEFLMNSYS. The disordered stretch occupies residues 668–690; it reads AAPSTSTAPAPPKAPVTAPPAPQ. Over residues 676-689 the composition is skewed to pro residues; it reads PAPPKAPVTAPPAP.

As to quaternary structure, interacts (via GBA motif) with guanine nucleotide-binding protein G(o) subunit alpha goa-1 (in GDP-bound form); the interaction leads to activation of goa-1. As to expression, expressed in some neurons including the head and tail neurons, HSN and VC, in a subset of glial cells, in the distal tips cells and in the intestine.

In terms of biological role, acts as a non-receptor guanine nucleotide exchange factor which binds to and activates G-protein alpha subunit goa-1. This is G-protein alpha subunit activating protein gbas-1 from Caenorhabditis elegans.